The primary structure comprises 131 residues: Small ribosomal subunit protein uS11 (131 aa).

Residues 1–15 (MAAQKVKKTRRRKER) are compositionally biased toward basic residues. Positions 1–23 (MAAQKVKKTRRRKERKNVEHGAA) are disordered.

Belongs to the universal ribosomal protein uS11 family. In terms of assembly, part of the 30S ribosomal subunit. Interacts with proteins S7 and S18. Binds to IF-3.

Functionally, located on the platform of the 30S subunit, it bridges several disparate RNA helices of the 16S rRNA. Forms part of the Shine-Dalgarno cleft in the 70S ribosome. The protein is Small ribosomal subunit protein uS11 of Clostridium perfringens (strain 13 / Type A).